The primary structure comprises 243 residues: DNA repair protein RecO (243 aa).

The protein belongs to the RecO family.

Its function is as follows. Involved in DNA repair and RecF pathway recombination. This is DNA repair protein RecO from Beutenbergia cavernae (strain ATCC BAA-8 / DSM 12333 / CCUG 43141 / JCM 11478 / NBRC 16432 / NCIMB 13614 / HKI 0122).